Consider the following 494-residue polypeptide: DnaJ homolog subfamily C member 7 (494 aa).

Residue Ala-2 is modified to N-acetylalanine. TPR repeat units lie at residues 28–61, 62–95, 96–129, 142–175, 210–243, 256–289, 294–327, and 328–361; these read AESF…CPNN, ASYY…DDSF, VRGH…DHKN, VMEY…APAC, ADAL…APDH, LKAK…DPNN, AKLY…DDTY, and IKAY…EKTK. A J domain is found at 381–451; the sequence is DYYKILGVDK…KKKTRYDSGQ (71 aa). Ser-393 is subject to Phosphoserine.

As to quaternary structure, associates with complexes containing chaperones HSP70 and HSP90. Interacts with the GAP domain of NF1. Interacts with HSP90AA1. Interacts with HSPA1A/B; the interaction is enhanced by ATP. Interacts with HSP90AB1. Interacts with PGR. Interacts with RAD9A; the interaction is interrupted by UV and heat shock treatments. Interacts with HUS1 and RAD1. Interacts with NR1I3; this complex may also include HSP90 Interacts with HSPA8. As to expression, widely expressed with high levels in liver, skeletal muscle, kidney and testis.

The protein resides in the cytoplasm. The protein localises to the nucleus. It is found in the cytoskeleton. Its function is as follows. Acts as a co-chaperone regulating the molecular chaperones HSP70 and HSP90 in folding of steroid receptors, such as the glucocorticoid receptor and the progesterone receptor. Proposed to act as a recycling chaperone by facilitating the return of chaperone substrates to early stages of chaperoning if further folding is required. In vitro, induces ATP-independent dissociation of HSP90 but not of HSP70 from the chaperone-substrate complexes. Recruits NR1I3 to the cytoplasm. This chain is DnaJ homolog subfamily C member 7 (Dnajc7), found in Mus musculus (Mouse).